The primary structure comprises 185 residues: Peptidyl-tRNA hydrolase (185 aa).

Tyr-15 lines the tRNA pocket. The active-site Proton acceptor is His-20. Residues Tyr-64, Asn-66, and Asn-112 each coordinate tRNA.

It belongs to the PTH family. Monomer.

The protein resides in the cytoplasm. The catalysed reaction is an N-acyl-L-alpha-aminoacyl-tRNA + H2O = an N-acyl-L-amino acid + a tRNA + H(+). Functionally, hydrolyzes ribosome-free peptidyl-tRNAs (with 1 or more amino acids incorporated), which drop off the ribosome during protein synthesis, or as a result of ribosome stalling. Its function is as follows. Catalyzes the release of premature peptidyl moieties from peptidyl-tRNA molecules trapped in stalled 50S ribosomal subunits, and thus maintains levels of free tRNAs and 50S ribosomes. This chain is Peptidyl-tRNA hydrolase, found in Porphyromonas gingivalis (strain ATCC BAA-308 / W83).